We begin with the raw amino-acid sequence, 349 residues long: Flagellar P-ring protein (349 aa).

The N-terminal stretch at 1–16 is a signal peptide; that stretch reads MKYFFIIALLLSSLYS.

The protein belongs to the FlgI family. As to quaternary structure, the basal body constitutes a major portion of the flagellar organelle and consists of four rings (L,P,S, and M) mounted on a central rod.

The protein resides in the periplasm. It localises to the bacterial flagellum basal body. Assembles around the rod to form the L-ring and probably protects the motor/basal body from shearing forces during rotation. In Aliarcobacter butzleri (strain RM4018) (Arcobacter butzleri), this protein is Flagellar P-ring protein.